Reading from the N-terminus, the 252-residue chain is Phosphate import ATP-binding protein PstB (252 aa).

An ABC transporter domain is found at 6 to 247; the sequence is MSIRDLNFYY…PAQKATEDYI (242 aa). 38 to 45 contributes to the ATP binding site; sequence GPSGCGKS.

It belongs to the ABC transporter superfamily. Phosphate importer (TC 3.A.1.7) family. As to quaternary structure, the complex is composed of two ATP-binding proteins (PstB), two transmembrane proteins (PstC and PstA) and a solute-binding protein (PstS).

The protein localises to the cell inner membrane. The catalysed reaction is phosphate(out) + ATP + H2O = ADP + 2 phosphate(in) + H(+). In terms of biological role, part of the ABC transporter complex PstSACB involved in phosphate import. Responsible for energy coupling to the transport system. The chain is Phosphate import ATP-binding protein PstB from Psychrobacter cryohalolentis (strain ATCC BAA-1226 / DSM 17306 / VKM B-2378 / K5).